Here is a 242-residue protein sequence, read N- to C-terminus: Demethylmenaquinone methyltransferase (242 aa).

Residues threonine 62, aspartate 83, and 112-113 each bind S-adenosyl-L-methionine; that span reads DV.

This sequence belongs to the class I-like SAM-binding methyltransferase superfamily. MenG/UbiE family.

It carries out the reaction a 2-demethylmenaquinol + S-adenosyl-L-methionine = a menaquinol + S-adenosyl-L-homocysteine + H(+). It functions in the pathway quinol/quinone metabolism; menaquinone biosynthesis; menaquinol from 1,4-dihydroxy-2-naphthoate: step 2/2. Its function is as follows. Methyltransferase required for the conversion of demethylmenaquinol (DMKH2) to menaquinol (MKH2). The chain is Demethylmenaquinone methyltransferase from Protochlamydia amoebophila (strain UWE25).